A 393-amino-acid polypeptide reads, in one-letter code: ATP phosphoribosyltransferase regulatory subunit (393 aa).

It belongs to the class-II aminoacyl-tRNA synthetase family. HisZ subfamily. In terms of assembly, heteromultimer composed of HisG and HisZ subunits.

The protein resides in the cytoplasm. It participates in amino-acid biosynthesis; L-histidine biosynthesis; L-histidine from 5-phospho-alpha-D-ribose 1-diphosphate: step 1/9. Its function is as follows. Required for the first step of histidine biosynthesis. May allow the feedback regulation of ATP phosphoribosyltransferase activity by histidine. This chain is ATP phosphoribosyltransferase regulatory subunit, found in Nitrosospira multiformis (strain ATCC 25196 / NCIMB 11849 / C 71).